The primary structure comprises 348 residues: tRNA (cytosine(34)-C(5))-methyltransferase, mitochondrial (348 aa).

S-adenosyl-L-methionine is bound by residues 139–145 (CAAPGGK), glutamate 162, aspartate 193, and aspartate 211. Cysteine 265 acts as the Nucleophile in catalysis.

Belongs to the class I-like SAM-binding methyltransferase superfamily. RsmB/NOP family.

The protein localises to the mitochondrion matrix. It catalyses the reaction cytidine(34) in mitochondrial tRNA + S-adenosyl-L-methionine = 5-methylcytidine(34) in mitochondrial tRNA + S-adenosyl-L-homocysteine + H(+). Its function is as follows. Mitochondrial tRNA methyltransferase that mediates methylation of cytosine to 5-methylcytosine (m5C) at position 34 of mt-tRNA(Met). mt-tRNA(Met) methylation at cytosine(34) takes place at the wobble position of the anticodon and initiates the formation of 5-formylcytosine (f(5)c) at this position. mt-tRNA(Met) containing the f(5)c modification at the wobble position enables recognition of the AUA codon in addition to the AUG codon, expanding codon recognition in mitochondrial translation. The chain is tRNA (cytosine(34)-C(5))-methyltransferase, mitochondrial from Mus musculus (Mouse).